Here is a 259-residue protein sequence, read N- to C-terminus: Glucose-1-phosphate thymidylyltransferase (259 aa).

Belongs to the inositol monophosphatase superfamily.

The catalysed reaction is dTTP + alpha-D-glucose 1-phosphate + H(+) = dTDP-alpha-D-glucose + diphosphate. It participates in antibiotic biosynthesis; streptomycin biosynthesis. The polypeptide is Glucose-1-phosphate thymidylyltransferase (strO) (Streptomyces griseus).